A 498-amino-acid chain; its full sequence is Lysine--tRNA ligase (498 aa).

Mg(2+)-binding residues include Glu-407 and Glu-414.

It belongs to the class-II aminoacyl-tRNA synthetase family. Homodimer. Mg(2+) is required as a cofactor.

Its subcellular location is the cytoplasm. The enzyme catalyses tRNA(Lys) + L-lysine + ATP = L-lysyl-tRNA(Lys) + AMP + diphosphate. The protein is Lysine--tRNA ligase (lysS) of Rhizobium meliloti (strain 1021) (Ensifer meliloti).